A 509-amino-acid chain; its full sequence is Monocarboxylate transporter 9 (509 aa).

Over M1–G12 the chain is Cytoplasmic. The next 12 membrane-spanning stretches (helical) occupy residues W13 to V33, W53 to V73, P80 to P100, I102 to T122, G137 to L157, F164 to C184, V305 to L325, I342 to I362, L372 to A392, L398 to V418, G433 to F453, and I462 to A482. Over L483–V509 the chain is Cytoplasmic.

Belongs to the major facilitator superfamily. Monocarboxylate porter (TC 2.A.1.13) family.

The protein localises to the cell membrane. The enzyme catalyses creatine(in) = creatine(out). The catalysed reaction is (R)-carnitine(in) = (R)-carnitine(out). Extracellular pH-and Na(+)-sensitive low-affinity creatine transporter. Also functions as a pH-independent carnitine efflux transporter. This Pongo abelii (Sumatran orangutan) protein is Monocarboxylate transporter 9 (SLC16A9).